A 184-amino-acid chain; its full sequence is Mediator of RNA polymerase II transcription subunit 30 (184 aa).

Residues S136 to M179 adopt a coiled-coil conformation.

Belongs to the Mediator complex subunit 30 family. Component of the Mediator complex.

It is found in the nucleus. In terms of biological role, component of the Mediator complex, a coactivator involved in the regulated transcription of nearly all RNA polymerase II-dependent genes. Mediator functions as a bridge to convey information from gene-specific regulatory proteins to the basal RNA polymerase II transcription machinery. Mediator is recruited to promoters by direct interactions with regulatory proteins and serves as a scaffold for the assembly of a functional preinitiation complex with RNA polymerase II and the general transcription factors. The sequence is that of Mediator of RNA polymerase II transcription subunit 30 (med30) from Xenopus laevis (African clawed frog).